Consider the following 375-residue polypeptide: Trichodiene synthase (375 aa).

The protein belongs to the trichodiene synthase family.

It catalyses the reaction (2E,6E)-farnesyl diphosphate = trichodiene + diphosphate. The protein operates within sesquiterpene biosynthesis; trichothecene biosynthesis. Functionally, TS is a member of the terpene cyclase group of enzymes. It catalyzes the isomerization and cyclization of farnesyl pyro-phosphate to form trichodiene, the first cyclic intermediate in the biosynthetic pathway for trichothecenes. It serves to branch trichothecene biosynthesis from the isoprenoid pathway. The polypeptide is Trichodiene synthase (TRI5) (Fusarium cerealis (Fusarium crookwellense)).